A 394-amino-acid chain; its full sequence is Cobalt-precorrin-5B C(1)-methyltransferase (394 aa).

The protein belongs to the CbiD family.

It carries out the reaction Co-precorrin-5B + S-adenosyl-L-methionine = Co-precorrin-6A + S-adenosyl-L-homocysteine. It participates in cofactor biosynthesis; adenosylcobalamin biosynthesis; cob(II)yrinate a,c-diamide from sirohydrochlorin (anaerobic route): step 6/10. In terms of biological role, catalyzes the methylation of C-1 in cobalt-precorrin-5B to form cobalt-precorrin-6A. This is Cobalt-precorrin-5B C(1)-methyltransferase from Clostridium beijerinckii (strain ATCC 51743 / NCIMB 8052) (Clostridium acetobutylicum).